We begin with the raw amino-acid sequence, 286 residues long: 4-hydroxybenzoate octaprenyltransferase (286 aa).

7 helical membrane passes run 20–40 (IGTLLLMWPCLMALVLAAGGM), 43–63 (LKVLVIFIIGVVVMRACGCII), 96–116 (LFVVMGLIAFGLVLMLNPLVV), 142–162 (FLGVVWSWSIPMAYAAQTGTV), 167–187 (WWLFAANWCWTVAYDTMYAMV), 210–230 (QVIALFQLAALACFIIAGWAA), and 234–254 (LVYALGIITFVGFSLYQQKLI).

The protein belongs to the UbiA prenyltransferase family. Requires Mg(2+) as cofactor.

The protein resides in the cell inner membrane. It carries out the reaction all-trans-octaprenyl diphosphate + 4-hydroxybenzoate = 4-hydroxy-3-(all-trans-octaprenyl)benzoate + diphosphate. Its pathway is cofactor biosynthesis; ubiquinone biosynthesis. Functionally, catalyzes the prenylation of para-hydroxybenzoate (PHB) with an all-trans polyprenyl group. Mediates the second step in the final reaction sequence of ubiquinone-8 (UQ-8) biosynthesis, which is the condensation of the polyisoprenoid side chain with PHB, generating the first membrane-bound Q intermediate 3-octaprenyl-4-hydroxybenzoate. The protein is 4-hydroxybenzoate octaprenyltransferase of Shewanella woodyi (strain ATCC 51908 / MS32).